We begin with the raw amino-acid sequence, 314 residues long: tRNA dimethylallyltransferase (314 aa).

11–18 (GPTGSGKT) contributes to the ATP binding site. 13 to 18 (TGSGKT) lines the substrate pocket. The interval 36–39 (DSMQ) is interaction with substrate tRNA.

This sequence belongs to the IPP transferase family. Monomer. Mg(2+) serves as cofactor.

The catalysed reaction is adenosine(37) in tRNA + dimethylallyl diphosphate = N(6)-dimethylallyladenosine(37) in tRNA + diphosphate. Catalyzes the transfer of a dimethylallyl group onto the adenine at position 37 in tRNAs that read codons beginning with uridine, leading to the formation of N6-(dimethylallyl)adenosine (i(6)A). This is tRNA dimethylallyltransferase from Chlamydia trachomatis serovar D (strain ATCC VR-885 / DSM 19411 / UW-3/Cx).